Reading from the N-terminus, the 568-residue chain is Proline--tRNA ligase (568 aa).

Belongs to the class-II aminoacyl-tRNA synthetase family. ProS type 1 subfamily. Homodimer.

Its subcellular location is the cytoplasm. It catalyses the reaction tRNA(Pro) + L-proline + ATP = L-prolyl-tRNA(Pro) + AMP + diphosphate. Functionally, catalyzes the attachment of proline to tRNA(Pro) in a two-step reaction: proline is first activated by ATP to form Pro-AMP and then transferred to the acceptor end of tRNA(Pro). As ProRS can inadvertently accommodate and process non-cognate amino acids such as alanine and cysteine, to avoid such errors it has two additional distinct editing activities against alanine. One activity is designated as 'pretransfer' editing and involves the tRNA(Pro)-independent hydrolysis of activated Ala-AMP. The other activity is designated 'posttransfer' editing and involves deacylation of mischarged Ala-tRNA(Pro). The misacylated Cys-tRNA(Pro) is not edited by ProRS. This chain is Proline--tRNA ligase, found in Listeria monocytogenes serotype 4b (strain F2365).